The chain runs to 365 residues: Methylthioribose-1-phosphate isomerase (365 aa).

Residues arginine 53–alanine 55, arginine 90, and glutamine 201 each bind substrate. The active-site Proton donor is aspartate 242. Residue asparagine 252–lysine 253 coordinates substrate.

The protein belongs to the eIF-2B alpha/beta/delta subunits family. MtnA subfamily.

It carries out the reaction 5-(methylsulfanyl)-alpha-D-ribose 1-phosphate = 5-(methylsulfanyl)-D-ribulose 1-phosphate. The protein operates within amino-acid biosynthesis; L-methionine biosynthesis via salvage pathway; L-methionine from S-methyl-5-thio-alpha-D-ribose 1-phosphate: step 1/6. Its function is as follows. Catalyzes the interconversion of methylthioribose-1-phosphate (MTR-1-P) into methylthioribulose-1-phosphate (MTRu-1-P). The polypeptide is Methylthioribose-1-phosphate isomerase (Methylorubrum populi (strain ATCC BAA-705 / NCIMB 13946 / BJ001) (Methylobacterium populi)).